The sequence spans 82 residues: Large ribosomal subunit protein uL23 (82 aa).

The protein belongs to the universal ribosomal protein uL23 family. Part of the 50S ribosomal subunit. Contacts protein L29.

Its function is as follows. Binds to 23S rRNA. One of the proteins that surrounds the polypeptide exit tunnel on the outside of the ribosome. This Methanosarcina acetivorans (strain ATCC 35395 / DSM 2834 / JCM 12185 / C2A) protein is Large ribosomal subunit protein uL23.